Reading from the N-terminus, the 59-residue chain is Protein translocase subunit SecE (59 aa).

The helical transmembrane segment at 33 to 53 (GAGIALVGLLGFIIFAVMTFV) threads the bilayer.

The protein belongs to the SecE/SEC61-gamma family. As to quaternary structure, component of the Sec protein translocase complex. Heterotrimer consisting of SecY (alpha), SecG (beta) and SecE (gamma) subunits. The heterotrimers can form oligomers, although 1 heterotrimer is thought to be able to translocate proteins. Interacts with the ribosome. May interact with SecDF, and other proteins may be involved.

It localises to the cell membrane. Functionally, essential subunit of the Sec protein translocation channel SecYEG. Clamps together the 2 halves of SecY. May contact the channel plug during translocation. The polypeptide is Protein translocase subunit SecE (Haloarcula marismortui (strain ATCC 43049 / DSM 3752 / JCM 8966 / VKM B-1809) (Halobacterium marismortui)).